The following is a 150-amino-acid chain: Dihydroneopterin triphosphate diphosphatase (150 aa).

One can recognise a Nudix hydrolase domain in the interval 5–146 (VYKRPVSILV…SNRQAIEQFV (142 aa)). Substrate contacts are provided by K7, R29, and T40. Residues 41–62 (GSVEEGETAPQAAMREVKEEVT) carry the Nudix box motif. Positions 56 and 60 each coordinate Mg(2+). 81–84 (FEIF) provides a ligand contact to substrate. A Mg(2+)-binding site is contributed by E117. S135 is a substrate binding site.

Belongs to the Nudix hydrolase family. Requires Mg(2+) as cofactor.

It catalyses the reaction 7,8-dihydroneopterin 3'-triphosphate + H2O = 7,8-dihydroneopterin 3'-phosphate + diphosphate + H(+). In terms of biological role, catalyzes the hydrolysis of dihydroneopterin triphosphate to dihydroneopterin monophosphate and pyrophosphate. Required for efficient folate biosynthesis. Can also hydrolyze nucleoside triphosphates with a preference for dATP. This is Dihydroneopterin triphosphate diphosphatase (nudB) from Escherichia coli O157:H7.